The chain runs to 129 residues: uncharacterized protein (129 aa).

The span at 86–96 (NDGFSSDDEPE) shows a compositional bias: acidic residues. The segment at 86-129 (NDGFSSDDEPEEHVILTEDNQGEPSETPQATFDITEFIKTEDED) is disordered. Residues 103–117 (EDNQGEPSETPQATF) are compositionally biased toward polar residues.

Belongs to the asfivirus D129L family.

This is an uncharacterized protein from African swine fever virus (isolate Tick/South Africa/Pretoriuskop Pr4/1996) (ASFV).